A 211-amino-acid chain; its full sequence is Glial cell line-derived neurotrophic factor (211 aa).

The signal sequence occupies residues 1–19 (MKLWDVVAVCLVLLHTASA). The propeptide occupies 20–75 (FPLPAGKRLLEAPAEDHSLGHRRVPFALTSDSNMPEDYPDQFDDVMDFIQATIKRL). The disordered stretch occupies residues 76 to 113 (KRSPDKQAAALPRRERNRQAAAASPENSRGKGRRGQRG). 3 disulfide bridges follow: C118–C179, C145–C208, and C149–C210. Residues N126 and N162 are each glycosylated (N-linked (GlcNAc...) asparagine).

It belongs to the TGF-beta family. GDNF subfamily. As to quaternary structure, homodimer; disulfide-linked. Interacts with GFRA1 coreceptor and RET: forms a 2:2:2 ternary complex composed of GDNF ligand, GFRA1 and RET receptor. Interacts (via propeptide) with SORL1 (via N-terminal ectodomain); this interaction affects GDNF-regulated, but not constitutive secretion. Also interacts with SORL1 in complex with GFRA1; this interaction leads to GDNF endocytosis and lysosomal degradation. As to expression, expressed in both the central nervous system (CNS) and in non-CNS tissues. Expressed in a highly dynamic pattern in the anterior neuroectoderm during the early stages of neurogenesis between 7.5 dpc and 10.5 dpc. Beginning at 10.5 dpc, expression begins in mesenchymal tissues of several organs including the digestive tract, kidney, testis, frontonasal mass, tooth primordium, tongue, mandible, whisker follicles, ear, eye, limb bud and in distinct regions of the brain. Also expressed in the heart, ileum, liver and muscle.

It localises to the secreted. Neurotrophic factor that enhances survival and morphological differentiation of dopaminergic neurons and increases their high-affinity dopamine uptake. Acts by binding to its coreceptor, GFRA1, leading to autophosphorylation and activation of the RET receptor. Involved in the development of the neural crest. In Mus musculus (Mouse), this protein is Glial cell line-derived neurotrophic factor (Gdnf).